A 149-amino-acid polypeptide reads, in one-letter code: 3-dehydroquinate dehydratase (149 aa).

Tyr26 (proton acceptor) is an active-site residue. The substrate site is built by Asn77, His83, and Asp90. Residue His103 is the Proton donor of the active site. Substrate is bound by residues 104–105 and Arg114; that span reads LS.

The protein belongs to the type-II 3-dehydroquinase family. Homododecamer.

The catalysed reaction is 3-dehydroquinate = 3-dehydroshikimate + H2O. It functions in the pathway metabolic intermediate biosynthesis; chorismate biosynthesis; chorismate from D-erythrose 4-phosphate and phosphoenolpyruvate: step 3/7. In terms of biological role, catalyzes a trans-dehydration via an enolate intermediate. The sequence is that of 3-dehydroquinate dehydratase (aroQ) from Haemophilus influenzae (strain ATCC 51907 / DSM 11121 / KW20 / Rd).